The following is a 307-amino-acid chain: Methionyl-tRNA formyltransferase (307 aa).

A (6S)-5,6,7,8-tetrahydrofolate-binding site is contributed by 108 to 111; sequence SLLP.

This sequence belongs to the Fmt family.

It carries out the reaction L-methionyl-tRNA(fMet) + (6R)-10-formyltetrahydrofolate = N-formyl-L-methionyl-tRNA(fMet) + (6S)-5,6,7,8-tetrahydrofolate + H(+). Functionally, attaches a formyl group to the free amino group of methionyl-tRNA(fMet). The formyl group appears to play a dual role in the initiator identity of N-formylmethionyl-tRNA by promoting its recognition by IF2 and preventing the misappropriation of this tRNA by the elongation apparatus. This Stenotrophomonas maltophilia (strain K279a) protein is Methionyl-tRNA formyltransferase.